A 1071-amino-acid chain; its full sequence is DNA-directed RNA polymerase subunit beta (1071 aa).

This sequence belongs to the RNA polymerase beta chain family. In terms of assembly, in plastids the minimal PEP RNA polymerase catalytic core is composed of four subunits: alpha, beta, beta', and beta''. When a (nuclear-encoded) sigma factor is associated with the core the holoenzyme is formed, which can initiate transcription.

The protein localises to the plastid. Its subcellular location is the chloroplast. The enzyme catalyses RNA(n) + a ribonucleoside 5'-triphosphate = RNA(n+1) + diphosphate. Functionally, DNA-dependent RNA polymerase catalyzes the transcription of DNA into RNA using the four ribonucleoside triphosphates as substrates. In Drimys granadensis, this protein is DNA-directed RNA polymerase subunit beta.